The primary structure comprises 479 residues: Rifampicin monooxygenase (479 aa).

Positions 12, 31, 32, 41, 98, 122, 156, 278, 291, and 292 each coordinate FAD.

This sequence belongs to the rifampicin monooxygenase family. It depends on FAD as a cofactor.

It catalyses the reaction rifampicin + NADPH + O2 = rifampicin para-naphthoquinone carboxamide + NADP(+) + H2O + H(+). The catalysed reaction is rifampicin + NADH + O2 = rifampicin para-naphthoquinone carboxamide + NAD(+) + H2O + H(+). Monooxygenase that can modify rifampicin, thereby inactivating its antibiotic activity. This Rhodococcus hoagii (Corynebacterium equii) protein is Rifampicin monooxygenase.